Here is a 432-residue protein sequence, read N- to C-terminus: Adenylosuccinate synthetase (432 aa).

GTP is bound by residues glycine 13–lysine 19 and glycine 41–threonine 43. Residue aspartate 14 is the Proton acceptor of the active site. Mg(2+) contacts are provided by aspartate 14 and glycine 41. IMP-binding positions include aspartate 14–lysine 17, asparagine 39–histidine 42, threonine 130, arginine 144, glutamine 225, threonine 240, and arginine 304. Histidine 42 (proton donor) is an active-site residue. Substrate is bound at residue alanine 300–arginine 306. GTP contacts are provided by residues arginine 306, lysine 332 to aspartate 334, and serine 415 to glycine 417.

The protein belongs to the adenylosuccinate synthetase family. As to quaternary structure, homodimer. Mg(2+) is required as a cofactor.

The protein localises to the cytoplasm. It catalyses the reaction IMP + L-aspartate + GTP = N(6)-(1,2-dicarboxyethyl)-AMP + GDP + phosphate + 2 H(+). It functions in the pathway purine metabolism; AMP biosynthesis via de novo pathway; AMP from IMP: step 1/2. Functionally, plays an important role in the de novo pathway of purine nucleotide biosynthesis. Catalyzes the first committed step in the biosynthesis of AMP from IMP. This is Adenylosuccinate synthetase from Yersinia pseudotuberculosis serotype O:1b (strain IP 31758).